We begin with the raw amino-acid sequence, 443 residues long: Nuclear distribution protein nudF (443 aa).

The region spanning 9–41 is the LisH domain; sequence QAEELHKSIIAYLSSINASRSCEVLREELQVDS. The stretch at 60-87 forms a coiled coil; the sequence is TGIARLQKKILDLESKLAGLQTELDTIS. WD repeat units lie at residues 111–152, 154–194, 198–238, 241–280, 283–343, 345–384, 388–427, and 429–443; these read SHRD…RTLK, HMRP…ANVR, GHDH…CVKV, SQGS…SVAS, GHEN…IKTL, GHDN…RLVK, AHGH…PGFQ, and VIAT…RIFT.

Belongs to the WD repeat LIS1/nudF family. Self-associates. Interacts with nudE and dynein.

Its subcellular location is the cytoplasm. It localises to the cytoskeleton. It is found in the spindle pole. In terms of biological role, positively regulates the activity of the minus-end directed microtubule motor protein dynein. May enhance dynein-mediated microtubule sliding by targeting dynein to the microtubule plus end. Required for nuclear migration during vegetative growth as well as development. Required for retrograde early endosome (EE) transport from the hyphal tip. Required for localization of dynein to the mitotic spindle poles. Recruits additional proteins to the dynein complex at SPBs. This chain is Nuclear distribution protein nudF, found in Aspergillus niger (strain ATCC MYA-4892 / CBS 513.88 / FGSC A1513).